We begin with the raw amino-acid sequence, 143 residues long: Putative pre-16S rRNA nuclease (143 aa).

Belongs to the YqgF nuclease family.

The protein resides in the cytoplasm. In terms of biological role, could be a nuclease involved in processing of the 5'-end of pre-16S rRNA. The sequence is that of Putative pre-16S rRNA nuclease from Leuconostoc citreum (strain KM20).